The following is a 160-amino-acid chain: Putative antiporter subunit mnhE2 (160 aa).

3 helical membrane-spanning segments follow: residues 22-42, 55-75, and 100-120; these read HFKFSTFFSGYLIGLIVIYIL, IWVAIKFLGVYLYQLITSSIS, and SDWSITFLTILIIITPGSTVI.

This sequence belongs to the CPA3 antiporters (TC 2.A.63) subunit E family. In terms of assembly, may form a heterooligomeric complex that consists of seven subunits: mnhA2, mnhB2, mnhC2, mnhD2, mnhE2, mnhF2 and mnhG2.

It localises to the cell membrane. The chain is Putative antiporter subunit mnhE2 (mnhE2) from Staphylococcus aureus (strain USA300).